The chain runs to 75 residues: Small ribosomal subunit protein bS18 (75 aa).

Belongs to the bacterial ribosomal protein bS18 family. In terms of assembly, part of the 30S ribosomal subunit. Forms a tight heterodimer with protein bS6.

Binds as a heterodimer with protein bS6 to the central domain of the 16S rRNA, where it helps stabilize the platform of the 30S subunit. The chain is Small ribosomal subunit protein bS18 from Vibrio atlanticus (strain LGP32) (Vibrio splendidus (strain Mel32)).